A 72-amino-acid polypeptide reads, in one-letter code: ATP synthase subunit c (72 aa).

The next 2 membrane-spanning stretches (helical) occupy residues 1 to 21 (MSLG…GAGI) and 48 to 68 (MFIG…FSFI).

Belongs to the ATPase C chain family. In terms of assembly, F-type ATPases have 2 components, F(1) - the catalytic core - and F(0) - the membrane proton channel. F(1) has five subunits: alpha(3), beta(3), gamma(1), delta(1), epsilon(1). F(0) has three main subunits: a(1), b(2) and c(10-14). The alpha and beta chains form an alternating ring which encloses part of the gamma chain. F(1) is attached to F(0) by a central stalk formed by the gamma and epsilon chains, while a peripheral stalk is formed by the delta and b chains.

Its subcellular location is the cell membrane. F(1)F(0) ATP synthase produces ATP from ADP in the presence of a proton or sodium gradient. F-type ATPases consist of two structural domains, F(1) containing the extramembraneous catalytic core and F(0) containing the membrane proton channel, linked together by a central stalk and a peripheral stalk. During catalysis, ATP synthesis in the catalytic domain of F(1) is coupled via a rotary mechanism of the central stalk subunits to proton translocation. In terms of biological role, key component of the F(0) channel; it plays a direct role in translocation across the membrane. A homomeric c-ring of between 10-14 subunits forms the central stalk rotor element with the F(1) delta and epsilon subunits. The chain is ATP synthase subunit c from Geobacillus kaustophilus (strain HTA426).